A 528-amino-acid chain; its full sequence is MTISSVKQSYGAKLGVGYIATATLLITVGVVTQDVASTVVAGIAGLLTLGSINAAETVASITELSAQTQRVADGDLDIEIDSTRTDEFGDLADSIEQMRVSLRDRLSEMEAARADLEQAQTDANEAQAEAEAAEEEAKELATAYQDIATEYGTVMAAAADGDLTQRVDVATEYDAMETVGQSFNRMMDELQETIETVTAVSKRITTETDEITETSRRVQQEVDAAVETVADIQTQATDQQTKLESAAVDIQDVSASAEEIAATIDDLADRSSEVEEASSDARTASETALTEMDQIQADAADAVTQVETLQQRMAEITDIADIISEIAEQTNMLALNASIEAARAGGQGSGADGNGFSVVADEVKSLAEETQSRADEIATVIAEVSEQTEEVTDSIQATETRVETGTETVESALSEIATIAEAVDDISASIEEMRETTSEQADTVQATADSIADVTEASAETATTAEEMSTQIRRQRDVVKSISDSLDSFRETAVDDLESRVRLFTINTDTTAASQTRAVGSPSIGGDD.

The next 2 helical transmembrane spans lie at 11–31 (GAKL…VGVV) and 35–55 (VAST…INAA). HAMP domains lie at 55–107 (AETV…DRLS) and 142–195 (TAYQ…ETIE). The 242-residue stretch at 214 to 455 (TSRRVQQEVD…ATADSIADVT (242 aa)) folds into the Methyl-accepting transducer domain. At Glu-259 the chain carries Glutamate methyl ester (Glu).

The protein belongs to the methyl-accepting chemotaxis (MCP) protein family. Interacts with Sop1.

It is found in the cell membrane. Functionally, transduces signals from the phototaxis receptor sensory rhodopsin I (Sop1). In Haloarcula marismortui (strain ATCC 43049 / DSM 3752 / JCM 8966 / VKM B-1809) (Halobacterium marismortui), this protein is Sensory rhodopsin I transducer (htr1).